Here is a 284-residue protein sequence, read N- to C-terminus: Distal membrane arm assembly component 2 (284 aa).

It belongs to the ATP synthase subunit s family. As to quaternary structure, associates with mitochondrial complex I assembly intermediates during its biogenesis.

In terms of biological role, involved in the assembly of the mitochondrial membrane respiratory chain NADH dehydrogenase (Complex I). This Drosophila melanogaster (Fruit fly) protein is Distal membrane arm assembly component 2.